A 233-amino-acid chain; its full sequence is DnaA regulatory inactivator Hda (233 aa).

The protein belongs to the DnaA family. HdA subfamily. As to quaternary structure, the active form seems to be an ADP-bound monomer. Forms the RIDA complex (regulatory inactivation of DnaA) of ATP-DnaA, ADP-Hda and the DNA-loaded beta sliding clamp (dnaN).

Mediates the interaction of DNA replication initiator protein DnaA with DNA polymerase subunit beta sliding clamp (dnaN). Stimulates hydrolysis of ATP-DnaA to ADP-DnaA, rendering DnaA inactive for reinitiation, a process called regulatory inhibition of DnaA or RIDA. The polypeptide is DnaA regulatory inactivator Hda (Photorhabdus laumondii subsp. laumondii (strain DSM 15139 / CIP 105565 / TT01) (Photorhabdus luminescens subsp. laumondii)).